The primary structure comprises 764 residues: Putative wall-associated receptor kinase-like 13 (764 aa).

Residues 1 to 26 form the signal peptide; the sequence is MRGNKNYYFLSLLYFLSLPILHFSSC. The Extracellular segment spans residues 27 to 379; it reads THKCGDIQIP…HRCIDYHIPE (353 aa). N-linked (GlcNAc...) asparagine glycans are attached at residues Asn78, Asn114, Asn121, Asn164, Asn233, Asn238, Asn259, and Asn283. The tract at residues 308 to 372 is atypical EGF-like; the sequence is CTCDNHIASG…CINTSGGHRC (65 aa). Cystine bridges form between Cys310–Cys323, Cys345–Cys363, and Cys352–Cys372. An N-linked (GlcNAc...) asparagine glycan is attached at Asn365. Residues 380-400 form a helical membrane-spanning segment; the sequence is VMLGLGAGFFVLIVGGGIWWW. The Cytoplasmic segment spans residues 401-764; the sequence is RKLLRKRRMT…SGSTEIARSM (364 aa). The Protein kinase domain maps to 454–728; the sequence is FNDNRVIGQG…REVSTALERI (275 aa). ATP is bound by residues 460–468 and Lys482; that span reads IGQGGQGTV. The residue at position 527 (Tyr527) is a Phosphotyrosine. Asp579 acts as the Proton acceptor in catalysis. Phosphothreonine occurs at positions 613 and 618. The residue at position 626 (Tyr626) is a Phosphotyrosine.

Belongs to the protein kinase superfamily. Ser/Thr protein kinase family.

Its subcellular location is the membrane. The enzyme catalyses L-seryl-[protein] + ATP = O-phospho-L-seryl-[protein] + ADP + H(+). It carries out the reaction L-threonyl-[protein] + ATP = O-phospho-L-threonyl-[protein] + ADP + H(+). Functionally, putative serine/threonine-protein kinase that may function as a signaling receptor of extracellular matrix component. In Arabidopsis thaliana (Mouse-ear cress), this protein is Putative wall-associated receptor kinase-like 13 (WAKL13).